The chain runs to 362 residues: D-alanine--D-alanine ligase (362 aa).

An ATP-grasp domain is found at 134–345 (KILAQRAGVP…YPDLITRLIR (212 aa)). 170–225 (GQLGTSNLFVKPSNQGSSVGITHVTDDSNYAEALAEAFKYDDKVLVEEGIVGTEVE) lines the ATP pocket. Residues D298, E312, and N314 each contribute to the Mg(2+) site.

Belongs to the D-alanine--D-alanine ligase family. Mg(2+) is required as a cofactor. Requires Mn(2+) as cofactor.

Its subcellular location is the cytoplasm. It catalyses the reaction 2 D-alanine + ATP = D-alanyl-D-alanine + ADP + phosphate + H(+). It participates in cell wall biogenesis; peptidoglycan biosynthesis. In terms of biological role, cell wall formation. The chain is D-alanine--D-alanine ligase from Lactobacillus delbrueckii subsp. bulgaricus (strain ATCC BAA-365 / Lb-18).